The chain runs to 360 residues: 3-dehydroquinate synthase (360 aa).

NAD(+) contacts are provided by residues 106 to 110, 130 to 131, Lys143, and Lys152; these read GVIGD and TS. Glu185, His246, and His262 together coordinate Zn(2+).

It belongs to the sugar phosphate cyclases superfamily. Dehydroquinate synthase family. Co(2+) serves as cofactor. Zn(2+) is required as a cofactor. Requires NAD(+) as cofactor.

The protein localises to the cytoplasm. The enzyme catalyses 7-phospho-2-dehydro-3-deoxy-D-arabino-heptonate = 3-dehydroquinate + phosphate. It participates in metabolic intermediate biosynthesis; chorismate biosynthesis; chorismate from D-erythrose 4-phosphate and phosphoenolpyruvate: step 2/7. In terms of biological role, catalyzes the conversion of 3-deoxy-D-arabino-heptulosonate 7-phosphate (DAHP) to dehydroquinate (DHQ). The polypeptide is 3-dehydroquinate synthase (Leuconostoc citreum (strain KM20)).